The primary structure comprises 130 residues: Small ribosomal subunit protein uS8 (130 aa).

It belongs to the universal ribosomal protein uS8 family. In terms of assembly, part of the 30S ribosomal subunit. Contacts proteins S5 and S12.

Functionally, one of the primary rRNA binding proteins, it binds directly to 16S rRNA central domain where it helps coordinate assembly of the platform of the 30S subunit. The polypeptide is Small ribosomal subunit protein uS8 (Photorhabdus laumondii subsp. laumondii (strain DSM 15139 / CIP 105565 / TT01) (Photorhabdus luminescens subsp. laumondii)).